Consider the following 283-residue polypeptide: Cilia- and flagella-associated protein 77 (283 aa).

Residues 151 to 170 (DQEDRRQKEPPPIPPNMTFG) form a disordered region.

Belongs to the CFAP77 family. In terms of assembly, microtubule inner protein component of sperm flagellar doublet microtubules.

Its subcellular location is the cytoplasm. The protein resides in the cytoskeleton. It is found in the cilium axoneme. The protein localises to the flagellum axoneme. Functionally, microtubule inner protein (MIP) part of the dynein-decorated doublet microtubules (DMTs) in cilia axoneme, which is required for motile cilia beating. This is Cilia- and flagella-associated protein 77 from Mus musculus (Mouse).